The sequence spans 103 residues: Large ribosomal subunit protein bL21 (103 aa).

This sequence belongs to the bacterial ribosomal protein bL21 family. As to quaternary structure, part of the 50S ribosomal subunit. Contacts protein L20.

Functionally, this protein binds to 23S rRNA in the presence of protein L20. The sequence is that of Large ribosomal subunit protein bL21 from Glaesserella parasuis serovar 5 (strain SH0165) (Haemophilus parasuis).